The primary structure comprises 233 residues: Biosynthetic peptidoglycan transglycosylase (233 aa).

A helical transmembrane segment spans residues 7–27; it reads VFTWLAKLVLGLFFASILSVV.

Belongs to the glycosyltransferase 51 family.

The protein localises to the cell inner membrane. The catalysed reaction is [GlcNAc-(1-&gt;4)-Mur2Ac(oyl-L-Ala-gamma-D-Glu-L-Lys-D-Ala-D-Ala)](n)-di-trans,octa-cis-undecaprenyl diphosphate + beta-D-GlcNAc-(1-&gt;4)-Mur2Ac(oyl-L-Ala-gamma-D-Glu-L-Lys-D-Ala-D-Ala)-di-trans,octa-cis-undecaprenyl diphosphate = [GlcNAc-(1-&gt;4)-Mur2Ac(oyl-L-Ala-gamma-D-Glu-L-Lys-D-Ala-D-Ala)](n+1)-di-trans,octa-cis-undecaprenyl diphosphate + di-trans,octa-cis-undecaprenyl diphosphate + H(+). The protein operates within cell wall biogenesis; peptidoglycan biosynthesis. Peptidoglycan polymerase that catalyzes glycan chain elongation from lipid-linked precursors. The sequence is that of Biosynthetic peptidoglycan transglycosylase from Shewanella oneidensis (strain ATCC 700550 / JCM 31522 / CIP 106686 / LMG 19005 / NCIMB 14063 / MR-1).